We begin with the raw amino-acid sequence, 356 residues long: Methylthioribose-1-phosphate isomerase (356 aa).

Substrate contacts are provided by residues 53-55 (RGA), Arg-97, and Gln-203. Asp-244 (proton donor) is an active-site residue. Position 254–255 (254–255 (NK)) interacts with substrate.

Belongs to the eIF-2B alpha/beta/delta subunits family. MtnA subfamily.

It catalyses the reaction 5-(methylsulfanyl)-alpha-D-ribose 1-phosphate = 5-(methylsulfanyl)-D-ribulose 1-phosphate. The protein operates within amino-acid biosynthesis; L-methionine biosynthesis via salvage pathway; L-methionine from S-methyl-5-thio-alpha-D-ribose 1-phosphate: step 1/6. Its function is as follows. Catalyzes the interconversion of methylthioribose-1-phosphate (MTR-1-P) into methylthioribulose-1-phosphate (MTRu-1-P). The polypeptide is Methylthioribose-1-phosphate isomerase (Rhodopirellula baltica (strain DSM 10527 / NCIMB 13988 / SH1)).